We begin with the raw amino-acid sequence, 428 residues long: Endoplasmic reticulum junction formation protein lunapark (428 aa).

Gly-2 carries the N-myristoyl glycine lipid modification. Residues 2–45 (GGLFSRWRTKPSTVEVLESIDKEIQALEEFREKNQRLQKLWVGR) lie on the Cytoplasmic side of the membrane. Residues 16-41 (EVLESIDKEIQALEEFREKNQRLQKL) adopt a coiled-coil conformation. Residues 46 to 66 (LILYSSVLYLFTCLIVYLWYL) form a helical membrane-spanning segment. Over 67 to 77 (PDEFTARLAMT) the chain is Lumenal. The helical transmembrane segment at 78-98 (LPFFAFPLIIWSIRTVIIFFF) threads the bilayer. Residues 99–428 (SKRTERNNEA…ELSGESLTAE (330 aa)) are Cytoplasmic-facing. The stretch at 102–128 (TERNNEALDDLKSQRKKILEEVMEKET) forms a coiled coil. Residues Ser-114, Ser-153, Ser-177, Ser-182, and Ser-194 each carry the phosphoserine modification. The disordered stretch occupies residues 143–247 (SKKAKECEPP…HPPGPPLARP (105 aa)). Positions 185–198 (QGPPPQVPVSPGPP) are enriched in pro residues. A phosphothreonine mark is found at Thr-211 and Thr-213. Ser-217 and Ser-227 each carry phosphoserine. Residues 276–301 (CQQCFSHNGMALKEEFEYIAFRCAYC) form a C4-type; plays a role in ER morphology zinc finger. 3 positions are modified to phosphoserine: Ser-321, Ser-353, and Ser-384. The disordered stretch occupies residues 356 to 428 (HDVLDDNTEQ…ELSGESLTAE (73 aa)). Over residues 386–401 (SEEPEEKQETENEEAS) the composition is skewed to acidic residues. Ser-414 is modified (phosphoserine).

Belongs to the lunapark family. As to quaternary structure, homodimer; homodimerization requires the C4-type zinc finger motif and decreases during mitosis in a phosphorylation-dependent manner. In terms of processing, myristoylated; myristoylation is necessary for the endoplasmic reticulum (ER) three-way ER tubular junction formation, but is not required neither for membrane translocation, membrane topology formation, nor for the specific localization to ER membranes. Post-translationally, phosphorylated. Phosphorylation occurs at Ser-177, Ser-182, Ser-217, Ser-227, Ser-321 and Ser-384 during interphase. Phosphorylation occurs at Ser-114, Ser-153, Ser-194, Thr-211 and Ser-353 during mitosis; these phosphorylations reduce both its homodimerization and the ER three-way tubular junction formation. Subject to proteasomal degradation following phosphorylation during mitosis. Expressed in neural precursor cells, where it is detected at the growth-cone-like structure and branching sites of neurite-like processes.

The protein resides in the endoplasmic reticulum membrane. Its function is as follows. Endoplasmic reticulum (ER)-shaping membrane protein that plays a role in determining ER morphology. Involved in the stabilization of nascent three-way ER tubular junctions within the ER network. May also play a role as a curvature-stabilizing protein within the three-way ER tubular junction network. May be involved in limb development. Is involved in central nervous system development. This Homo sapiens (Human) protein is Endoplasmic reticulum junction formation protein lunapark.